The chain runs to 185 residues: Photosystem I assembly protein Ycf4 (185 aa).

Transmembrane regions (helical) follow at residues 24–44 (YIIGGMLTIGGIGFLLASISS) and 66–86 (IIMGAYGVVANLLNFYLWYMV).

Belongs to the Ycf4 family.

Its subcellular location is the cellular thylakoid membrane. In terms of biological role, seems to be required for the assembly of the photosystem I complex. The chain is Photosystem I assembly protein Ycf4 from Prochlorococcus marinus (strain MIT 9312).